We begin with the raw amino-acid sequence, 252 residues long: 3-deoxy-manno-octulosonate cytidylyltransferase (252 aa).

It belongs to the KdsB family.

It is found in the cytoplasm. The enzyme catalyses 3-deoxy-alpha-D-manno-oct-2-ulosonate + CTP = CMP-3-deoxy-beta-D-manno-octulosonate + diphosphate. The protein operates within nucleotide-sugar biosynthesis; CMP-3-deoxy-D-manno-octulosonate biosynthesis; CMP-3-deoxy-D-manno-octulosonate from 3-deoxy-D-manno-octulosonate and CTP: step 1/1. Its pathway is bacterial outer membrane biogenesis; lipopolysaccharide biosynthesis. In terms of biological role, activates KDO (a required 8-carbon sugar) for incorporation into bacterial lipopolysaccharide in Gram-negative bacteria. The polypeptide is 3-deoxy-manno-octulosonate cytidylyltransferase (Solibacter usitatus (strain Ellin6076)).